The chain runs to 123 residues: uncharacterized protein (123 aa).

The segment at 76–97 (ENNKRKKKSEGERVRSPRTFRG) is disordered.

This is an uncharacterized protein from Saccharomyces cerevisiae (strain ATCC 204508 / S288c) (Baker's yeast).